We begin with the raw amino-acid sequence, 772 residues long: Semaphorin-3A (772 aa).

The first 22 residues, 1–22, serve as a signal peptide directing secretion; it reads MGWLRGIALLSLGVLLAGRVNC. The region spanning 31-514 is the Sema domain; it reads RLKLSYKEML…SATGVSQLPL (484 aa). Asparagine 53 carries N-linked (GlcNAc...) asparagine glycosylation. A disulfide bond links cysteine 103 and cysteine 114. An N-linked (GlcNAc...) asparagine glycan is attached at asparagine 125. 4 cysteine pairs are disulfide-bonded: cysteine 132/cysteine 141, cysteine 269/cysteine 381, cysteine 293/cysteine 341, and cysteine 517/cysteine 535. The Ig-like C2-type domain maps to 576–665; the sequence is PSGQTLEEKI…GFIQTLLKVT (90 aa). Asparagine 591 carries an N-linked (GlcNAc...) asparagine glycan. The cysteines at positions 650 and 723 are disulfide-linked. Residues 730-772 form a disordered region; the sequence is DRKQRRQRPANAQVNTNKWKHLQENKKGRNRRTHEFERAPRSV. The span at 750-772 shows a compositional bias: basic and acidic residues; that stretch reads HLQENKKGRNRRTHEFERAPRSV.

Belongs to the semaphorin family. Expressed at relatively high levels in brain and muscle, moderate levels in lung, bursa, and heart and virtually absent in liver. Collapsin-1, -2, -3, and -5 bind to overlapping but distinct axon tracts.

Its subcellular location is the secreted. Functionally, induces the collapse and paralysis of neuronal growth cones. Could serve as a ligand that guides specific growth cones by a motility-inhibiting mechanism. Binds to neuropilin. The chain is Semaphorin-3A (SEMA3A) from Gallus gallus (Chicken).